A 247-amino-acid polypeptide reads, in one-letter code: 1-(5-phosphoribosyl)-5-[(5-phosphoribosylamino)methylideneamino] imidazole-4-carboxamide isomerase (247 aa).

Asp-8 functions as the Proton acceptor in the catalytic mechanism. Asp-131 acts as the Proton donor in catalysis.

The protein belongs to the HisA/HisF family.

The protein localises to the cytoplasm. It catalyses the reaction 1-(5-phospho-beta-D-ribosyl)-5-[(5-phospho-beta-D-ribosylamino)methylideneamino]imidazole-4-carboxamide = 5-[(5-phospho-1-deoxy-D-ribulos-1-ylimino)methylamino]-1-(5-phospho-beta-D-ribosyl)imidazole-4-carboxamide. Its pathway is amino-acid biosynthesis; L-histidine biosynthesis; L-histidine from 5-phospho-alpha-D-ribose 1-diphosphate: step 4/9. The sequence is that of 1-(5-phosphoribosyl)-5-[(5-phosphoribosylamino)methylideneamino] imidazole-4-carboxamide isomerase from Acidovorax sp. (strain JS42).